Reading from the N-terminus, the 458-residue chain is MHDKTWSGRFNEPVSELVKQYTASIGFDQRLAEWDIQGSLAHAQMLTRSGVLSENDLTDIRRGMSEILEEIRSGKIEWPLDLEDVHMNIERRLTDKIGDAGKRLHTGRSRNDQVATDIRLWLRDQITVIQNLIQNLQTALLDLAEQNAEAVMPGFTHLQVAQPVSFGHHMLAYVEMLGRDFERMTDCRKRVNRMPLGAAALAGTTYPIQREITAELLGFEQICQNSLDAVSDRDFAIEFTAAASLVMVHLSRLSEELILWMSPRFGFIDIADRFCTGSSIMPQKKNPDVPELVRGKSGRVIGHLIGLITLMKSQPLAYNKDNQEDKEPLFDTADTLIDTLRIYADMMRGVTVKPGNMRAAVMQGFATATDLADYLVKKGMPFRDAHEVVAQAVRHADEAGVDLSELPLEALQGFSKLISDDVYGVLTPEGSLNARNHLGGTAPEQVRLQVKRWREMSA.

This sequence belongs to the lyase 1 family. Argininosuccinate lyase subfamily.

It localises to the cytoplasm. The catalysed reaction is 2-(N(omega)-L-arginino)succinate = fumarate + L-arginine. It participates in amino-acid biosynthesis; L-arginine biosynthesis; L-arginine from L-ornithine and carbamoyl phosphate: step 3/3. This Neisseria gonorrhoeae (strain ATCC 700825 / FA 1090) protein is Argininosuccinate lyase.